Here is a 365-residue protein sequence, read N- to C-terminus: 5-hydroxytryptamine receptor 1F (365 aa).

Residues methionine 1 to isoleucine 24 lie on the Extracellular side of the membrane. 2 N-linked (GlcNAc...) asparagine glycosylation sites follow: asparagine 5 and asparagine 10. Residues leucine 25–isoleucine 49 traverse the membrane as a helical segment. The Cytoplasmic segment spans residues valine 50 to asparagine 59. Residues tyrosine 60–isoleucine 81 traverse the membrane as a helical segment. At valine 82–cysteine 96 the chain is on the extracellular side. A disulfide bridge links cysteine 96 with cysteine 172. The helical transmembrane segment at aspartate 97–leucine 119 threads the bilayer. The serotonin site is built by aspartate 103 and cysteine 107. A DRY motif; important for ligand-induced conformation changes motif is present at residues aspartate 120–tyrosine 122. The Cytoplasmic segment spans residues aspartate 120–histidine 139. The chain crosses the membrane as a helical span at residues alanine 140–leucine 159. Residues phenylalanine 160 to histidine 178 lie on the Extracellular side of the membrane. Residues isoleucine 179 to tyrosine 202 traverse the membrane as a helical segment. Residues lysine 203–alanine 291 are Cytoplasmic-facing. The chain crosses the membrane as a helical span at residues alanine 292–valine 315. Residues valine 316–glutamate 327 are Extracellular-facing. The chain crosses the membrane as a helical span at residues methionine 328 to phenylalanine 350. Positions asparagine 343–tyrosine 347 match the NPxxY motif; important for ligand-induced conformation changes and signaling motif. The Cytoplasmic segment spans residues asparagine 351–arginine 365.

This sequence belongs to the G-protein coupled receptor 1 family.

The protein localises to the cell membrane. Its function is as follows. G-protein coupled receptor for 5-hydroxytryptamine (serotonin). Also functions as a receptor for various alkaloids and psychoactive substances. Ligand binding causes a conformation change that triggers signaling via guanine nucleotide-binding proteins (G proteins) and modulates the activity of downstream effectors, such as adenylate cyclase. HTR1F is coupled to G(i)/G(o) G alpha proteins and mediates inhibitory neurotransmission by inhibiting adenylate cyclase activity. The polypeptide is 5-hydroxytryptamine receptor 1F (HTR1F) (Pan troglodytes (Chimpanzee)).